The chain runs to 141 residues: Relaxin-3 (141 aa).

Positions 1-24 are cleaved as a signal peptide; the sequence is MAMLGLLLLASWALLGALGLQAEA. 3 cysteine pairs are disulfide-bonded: Cys-34–Cys-128, Cys-46–Cys-141, and Cys-127–Cys-132. The propeptide at 54–117 is connecting peptide; the sequence is ADILAHESLG…GSPGVVRGSR (64 aa).

It belongs to the insulin family. Heterodimer of a B chain and an A chain linked by two disulfide bonds. High expression in the brain localized to the pons/medulla with highest levels in pars ventromedialis of the dorsal tegmental nucleus. Significant expression is also detected in the spleen, thymus, lung, testis and ovary.

Its subcellular location is the secreted. In terms of biological role, may play a role in neuropeptide signaling processes. Ligand for LGR7, relaxin-3 receptor-1 and relaxin-3 receptor-2. The protein is Relaxin-3 (Rln3) of Mus musculus (Mouse).